Here is a 37-residue protein sequence, read N- to C-terminus: Large ribosomal subunit protein bL36 (37 aa).

The protein belongs to the bacterial ribosomal protein bL36 family.

This is Large ribosomal subunit protein bL36 from Pasteurella multocida (strain Pm70).